We begin with the raw amino-acid sequence, 345 residues long: Uroporphyrinogen decarboxylase (345 aa).

Substrate-binding positions include 27-31 (RQAGR), F46, D76, Y152, S207, and H320.

This sequence belongs to the uroporphyrinogen decarboxylase family. In terms of assembly, homodimer.

The protein resides in the cytoplasm. The enzyme catalyses uroporphyrinogen III + 4 H(+) = coproporphyrinogen III + 4 CO2. The protein operates within porphyrin-containing compound metabolism; protoporphyrin-IX biosynthesis; coproporphyrinogen-III from 5-aminolevulinate: step 4/4. Catalyzes the decarboxylation of four acetate groups of uroporphyrinogen-III to yield coproporphyrinogen-III. The chain is Uroporphyrinogen decarboxylase from Oceanobacillus iheyensis (strain DSM 14371 / CIP 107618 / JCM 11309 / KCTC 3954 / HTE831).